The sequence spans 96 residues: Prokineticin Bm8-d (96 aa).

The first 19 residues, 1 to 19 (MKCFAQIVVLLLVIAFSHG), serve as a signal peptide directing secretion. 5 disulfide bridges follow: cysteine 26–cysteine 38, cysteine 32–cysteine 50, cysteine 37–cysteine 78, cysteine 60–cysteine 86, and cysteine 80–cysteine 95.

Belongs to the AVIT (prokineticin) family. In terms of tissue distribution, expressed by the skin glands.

The protein localises to the secreted. Its function is as follows. Potent agonist for both PKR1/PROKR1 and PKR2/PROKR2, and inducer of a potent and long-lasting hyperalgesia. Also potentiates capsaicin-induced TRPV1 current, when tested on DRG neurons. At subnanomolar concentrations, this protein both induces potent chemotaxis of macrophages and stimulates LPS-induced production of the pro-inflammatory cytokines IL-1 and IL-12. In vivo, potently stimulates the contraction of the guinea-pig gastrointestinal (GI) smooth muscle (nanomolar concentration). In Bombina maxima (Giant fire-bellied toad), this protein is Prokineticin Bm8-d.